Consider the following 81-residue polypeptide: MSHSVKIYDTCIGCTQCVRACPLDVLEMVPWDGCKAGQIASSPRTEDCVGCKRCETACPTDFLSIRVYLGDETTRSMGLAY.

4Fe-4S ferredoxin-type domains are found at residues 2 to 31 and 37 to 68; these read SHSVKIYDTCIGCTQCVRACPLDVLEMVPW and GQIASSPRTEDCVGCKRCETACPTDFLSIRVY. Residues C11, C14, C17, C21, C48, C51, C54, and C58 each coordinate [4Fe-4S] cluster.

As to quaternary structure, the cyanobacterial PSI reaction center is composed of one copy each of PsaA,B,C,D,E,F,I,J,K,L,M and X, and forms trimeric complexes. The cofactor is [4Fe-4S] cluster.

The protein localises to the cellular thylakoid membrane. It carries out the reaction reduced [plastocyanin] + hnu + oxidized [2Fe-2S]-[ferredoxin] = oxidized [plastocyanin] + reduced [2Fe-2S]-[ferredoxin]. Apoprotein for the two 4Fe-4S centers FA and FB of photosystem I (PSI); essential for photochemical activity. FB is the terminal electron acceptor of PSI, donating electrons to ferredoxin. The C-terminus interacts with PsaA/B/D and helps assemble the protein into the PSI complex. Required for binding of PsaD and PsaE to PSI. PSI is a plastocyanin/cytochrome c6-ferredoxin oxidoreductase, converting photonic excitation into a charge separation, which transfers an electron from the donor P700 chlorophyll pair to the spectroscopically characterized acceptors A0, A1, FX, FA and FB in turn. This is Photosystem I iron-sulfur center from Synechococcus sp. (strain RCC307).